A 648-amino-acid polypeptide reads, in one-letter code: Beta-glucuronidase (648 aa).

Positions 1-22 (MSLKWSACWVALGQLLCSCALA) are cleaved as a signal peptide. N-linked (GlcNAc...) asparagine glycans are attached at residues Asn172 and Asn416. Glu447 functions as the Proton donor in the catalytic mechanism. A glycan (N-linked (GlcNAc...) asparagine) is linked at Asn627.

Belongs to the glycosyl hydrolase 2 family. In terms of assembly, homotetramer.

It localises to the lysosome. The protein localises to the endoplasmic reticulum. It catalyses the reaction a beta-D-glucuronoside + H2O = D-glucuronate + an alcohol. With respect to regulation, inhibited by L-aspartic acid. Plays an important role in the degradation of dermatan and keratan sulfates. The sequence is that of Beta-glucuronidase (Gusb) from Mus musculus (Mouse).